A 267-amino-acid polypeptide reads, in one-letter code: 3-methyl-2-oxobutanoate hydroxymethyltransferase (267 aa).

Asp46 and Asp85 together coordinate Mg(2+). 3-methyl-2-oxobutanoate is bound by residues 46 to 47 (DS), Asp85, and Lys115. Mg(2+) is bound at residue Glu117. Catalysis depends on Glu184, which acts as the Proton acceptor.

It belongs to the PanB family. Homodecamer; pentamer of dimers. Mg(2+) is required as a cofactor.

Its subcellular location is the cytoplasm. It carries out the reaction 3-methyl-2-oxobutanoate + (6R)-5,10-methylene-5,6,7,8-tetrahydrofolate + H2O = 2-dehydropantoate + (6S)-5,6,7,8-tetrahydrofolate. It participates in cofactor biosynthesis; (R)-pantothenate biosynthesis; (R)-pantoate from 3-methyl-2-oxobutanoate: step 1/2. Catalyzes the reversible reaction in which hydroxymethyl group from 5,10-methylenetetrahydrofolate is transferred onto alpha-ketoisovalerate to form ketopantoate. The protein is 3-methyl-2-oxobutanoate hydroxymethyltransferase of Geobacter metallireducens (strain ATCC 53774 / DSM 7210 / GS-15).